The primary structure comprises 176 residues: Large ribosomal subunit protein uL10 (176 aa).

This sequence belongs to the universal ribosomal protein uL10 family. In terms of assembly, part of the ribosomal stalk of the 50S ribosomal subunit. The N-terminus interacts with L11 and the large rRNA to form the base of the stalk. The C-terminus forms an elongated spine to which L12 dimers bind in a sequential fashion forming a multimeric L10(L12)X complex.

Functionally, forms part of the ribosomal stalk, playing a central role in the interaction of the ribosome with GTP-bound translation factors. In Alcanivorax borkumensis (strain ATCC 700651 / DSM 11573 / NCIMB 13689 / SK2), this protein is Large ribosomal subunit protein uL10.